The chain runs to 107 residues: Protein phosphatase 1 regulatory subunit INH3 (107 aa).

A compositionally biased stretch (low complexity) spans Met1 to Ser14. Disordered stretches follow at residues Met1–Lys40 and Pro69–Asp107. Acidic residues predominate over residues Asp71 to Asp80. Positions Asn81–Ser94 are enriched in basic and acidic residues. Positions Gly95 to Asp107 are enriched in low complexity.

Interacts with protein phosphatase 1. In terms of tissue distribution, expressed in roots, cotyledons, leaves, flowers and embryos.

Functionally, inhibitor of protein-phosphatase 1 (PP1). Binds to and inhibits PP1 activity. Required for early embryogenesis progression. The polypeptide is Protein phosphatase 1 regulatory subunit INH3 (Arabidopsis thaliana (Mouse-ear cress)).